Consider the following 192-residue polypeptide: Elongation factor P (192 aa).

Belongs to the elongation factor P family.

It is found in the cytoplasm. The protein operates within protein biosynthesis; polypeptide chain elongation. Its function is as follows. Involved in peptide bond synthesis. Stimulates efficient translation and peptide-bond synthesis on native or reconstituted 70S ribosomes in vitro. Probably functions indirectly by altering the affinity of the ribosome for aminoacyl-tRNA, thus increasing their reactivity as acceptors for peptidyl transferase. The protein is Elongation factor P of Borrelia turicatae (strain 91E135).